A 356-amino-acid chain; its full sequence is UDP-N-acetylglucosamine--N-acetylmuramyl-(pentapeptide) pyrophosphoryl-undecaprenol N-acetylglucosamine transferase (356 aa).

Residues 11–13 (TAG), asparagine 123, arginine 159, and serine 192 each bind UDP-N-acetyl-alpha-D-glucosamine.

It belongs to the glycosyltransferase 28 family. MurG subfamily.

The protein localises to the cell membrane. It carries out the reaction di-trans,octa-cis-undecaprenyl diphospho-N-acetyl-alpha-D-muramoyl-L-alanyl-D-glutamyl-meso-2,6-diaminopimeloyl-D-alanyl-D-alanine + UDP-N-acetyl-alpha-D-glucosamine = di-trans,octa-cis-undecaprenyl diphospho-[N-acetyl-alpha-D-glucosaminyl-(1-&gt;4)]-N-acetyl-alpha-D-muramoyl-L-alanyl-D-glutamyl-meso-2,6-diaminopimeloyl-D-alanyl-D-alanine + UDP + H(+). The protein operates within cell wall biogenesis; peptidoglycan biosynthesis. Cell wall formation. Catalyzes the transfer of a GlcNAc subunit on undecaprenyl-pyrophosphoryl-MurNAc-pentapeptide (lipid intermediate I) to form undecaprenyl-pyrophosphoryl-MurNAc-(pentapeptide)GlcNAc (lipid intermediate II). This is UDP-N-acetylglucosamine--N-acetylmuramyl-(pentapeptide) pyrophosphoryl-undecaprenol N-acetylglucosamine transferase from Tropheryma whipplei (strain Twist) (Whipple's bacillus).